The primary structure comprises 152 residues: Plant UBX domain-containing protein 12 (152 aa).

Residues 32–61 (KRFSEEESEETENTTNSSNAVFGFPNLPEE) are disordered. One can recognise a UBX domain in the interval 67-150 (DQSVLCRICV…GLANSLVSVT (84 aa)).

The polypeptide is Plant UBX domain-containing protein 12 (Arabidopsis thaliana (Mouse-ear cress)).